Here is a 513-residue protein sequence, read N- to C-terminus: MTRVINLDGESLTLEDVIAIARQGVACRIDDSAIEAVNASRKIVDDIVSEKRVVYGVTTGFGSLCNVSISPEDTVQLQENLIRTHASGFGDPLPEDAVRAIMLIRINSLVKGYSGIRLSTIEKLLELLNKGVHPYIPEKGSLGASGDLAPLAHMVLPMLGLGKAYYKGELLSGQEALDKAGIDKISLAAKEGLALINGTTVLTAIGALATYDAIQLLKLSDLAGALSLEVHNGITSPFEENLHTIRPQSGQLATARNIRNLLEGSQNTTVATQSRVQDPYTLRCMPQIHGASKDSIAYVKSKVDIEINSVTDNPIICKDGHVISGGNFHGEPMAQSFDFLGIAISEIGNVSERRVERLVNSQLSKLPSFLVKYPGLNSGFMITQYACASLASENKVLAHPASVDSIPSCENQEDFVSMGTTAARKAFEILKNSRRIVATEIMAACQALDLKPENHELGKGTKVAYDLFRKEVNFIEHDKHIEIYDELNKASAVIEDPSFLEAVEQAVELSIQF.

Positions 144-146 (ASG) form a cross-link, 5-imidazolinone (Ala-Gly). The residue at position 145 (Ser-145) is a 2,3-didehydroalanine (Ser).

Belongs to the PAL/histidase family. Contains an active site 4-methylidene-imidazol-5-one (MIO), which is formed autocatalytically by cyclization and dehydration of residues Ala-Ser-Gly.

Its subcellular location is the cytoplasm. It carries out the reaction L-histidine = trans-urocanate + NH4(+). It functions in the pathway amino-acid degradation; L-histidine degradation into L-glutamate; N-formimidoyl-L-glutamate from L-histidine: step 1/3. In Streptococcus pyogenes serotype M18 (strain MGAS8232), this protein is Histidine ammonia-lyase.